Consider the following 524-residue polypeptide: Probable glycine dehydrogenase (decarboxylating) subunit 2 (524 aa).

At Lys-296 the chain carries N6-(pyridoxal phosphate)lysine.

The protein belongs to the GcvP family. C-terminal subunit subfamily. The glycine cleavage system is composed of four proteins: P, T, L and H. In this organism, the P 'protein' is a heterodimer of two subunits. It depends on pyridoxal 5'-phosphate as a cofactor.

The catalysed reaction is N(6)-[(R)-lipoyl]-L-lysyl-[glycine-cleavage complex H protein] + glycine + H(+) = N(6)-[(R)-S(8)-aminomethyldihydrolipoyl]-L-lysyl-[glycine-cleavage complex H protein] + CO2. In terms of biological role, the glycine cleavage system catalyzes the degradation of glycine. The P protein binds the alpha-amino group of glycine through its pyridoxal phosphate cofactor; CO(2) is released and the remaining methylamine moiety is then transferred to the lipoamide cofactor of the H protein. The protein is Probable glycine dehydrogenase (decarboxylating) subunit 2 of Caulobacter vibrioides (strain ATCC 19089 / CIP 103742 / CB 15) (Caulobacter crescentus).